The sequence spans 439 residues: Glutamine synthetase (439 aa).

The GS beta-grasp domain maps to 12–93 (SKIKFVQLVF…VYGFIYKDNK (82 aa)). Residues 99 to 439 (PRGILKRALE…EWELERYFFL (341 aa)) form the GS catalytic domain. Glu122 and Glu124 together coordinate Mg(2+). Glu172 contributes to the ATP binding site. Mg(2+)-binding residues include Glu177 and Glu184. An L-glutamate-binding site is contributed by Gly229. His233 is a Mg(2+) binding site. Residues 235–237 (HIS) and Ser237 contribute to the ATP site. L-glutamate contacts are provided by Arg283, Glu289, and Arg301. ATP-binding residues include Arg301, Arg306, and Lys313. Residue Glu318 coordinates Mg(2+). L-glutamate is bound at residue Arg320.

This sequence belongs to the glutamine synthetase family. In terms of assembly, oligomer of 12 subunits arranged in the form of two hexagons. Requires Mg(2+) as cofactor.

The protein resides in the cytoplasm. It carries out the reaction L-glutamate + NH4(+) + ATP = L-glutamine + ADP + phosphate + H(+). In terms of biological role, probably involved in nitrogen metabolism via ammonium assimilation. Catalyzes the ATP-dependent biosynthesis of glutamine from glutamate and ammonia. The chain is Glutamine synthetase from Pyrococcus furiosus (strain ATCC 43587 / DSM 3638 / JCM 8422 / Vc1).